Reading from the N-terminus, the 206-residue chain is ATP-dependent Clp protease proteolytic subunit 2 (206 aa).

S100 acts as the Nucleophile in catalysis. H125 is a catalytic residue.

Belongs to the peptidase S14 family. Fourteen ClpP subunits assemble into 2 heptameric rings which stack back to back to give a disk-like structure with a central cavity, resembling the structure of eukaryotic proteasomes.

It is found in the cytoplasm. The catalysed reaction is Hydrolysis of proteins to small peptides in the presence of ATP and magnesium. alpha-casein is the usual test substrate. In the absence of ATP, only oligopeptides shorter than five residues are hydrolyzed (such as succinyl-Leu-Tyr-|-NHMec, and Leu-Tyr-Leu-|-Tyr-Trp, in which cleavage of the -Tyr-|-Leu- and -Tyr-|-Trp bonds also occurs).. Cleaves peptides in various proteins in a process that requires ATP hydrolysis. Has a chymotrypsin-like activity. Plays a major role in the degradation of misfolded proteins. The sequence is that of ATP-dependent Clp protease proteolytic subunit 2 from Myxococcus xanthus.